A 77-amino-acid chain; its full sequence is Large ribosomal subunit protein bL28 (77 aa).

Residues 1–21 form a disordered region; it reads MARVCKVTGKRPMTGNNVSHA.

Belongs to the bacterial ribosomal protein bL28 family.

This chain is Large ribosomal subunit protein bL28, found in Chromobacterium violaceum (strain ATCC 12472 / DSM 30191 / JCM 1249 / CCUG 213 / NBRC 12614 / NCIMB 9131 / NCTC 9757 / MK).